A 437-amino-acid chain; its full sequence is UDP-glucuronate 4-epimerase 4 (437 aa).

A helical membrane pass occupies residues 30–50 (SLTKFAFFSFFLLCLISLLFL). A disordered region spans residues 56–76 (INPSSPSDPSRRSLRTNTYGG). Residues 96–116 (GITVLVTGAAGFVGTHVSAAL) form a helical membrane-spanning segment. Residue 98 to 129 (TVLVTGAAGFVGTHVSAALKRRGDGVIGLDNF) coordinates NAD(+). Y248 (proton acceptor) is an active-site residue.

Belongs to the NAD(P)-dependent epimerase/dehydratase family. As to quaternary structure, homodimer. As to expression, in roots, leaves, siliques, flowers, pollen and stems.

The protein resides in the golgi apparatus. It is found in the golgi stack membrane. The catalysed reaction is UDP-alpha-D-glucuronate = UDP-alpha-D-galacturonate. Activated by glycerol, not effected by dimethyl sulfoxide and inhibited by high concentration of monovalent salts, UDP-xylose, UDP-arabinose or UDP. Involved in the synthesis of the negatively charged monosaccharide that forms the backbone of pectic cell wall components. This chain is UDP-glucuronate 4-epimerase 4 (GAE4), found in Arabidopsis thaliana (Mouse-ear cress).